The sequence spans 401 residues: MPNPDKHNFSSLSFGTLAVHGGNEIDKTSGAIRTPIVMANSYSLPYDPSTMDWSDTEEPSYTRNSGHNQICLQRKLAAMERGEDAAVFATGVAALHAVFFTFLKSGDHVIVGDVTYEAVWRLFAELLPERYNIEATFVDMGNMDAVRAAVRPKTKLIHTETVANPTTKVADIAALVSIAKDAGALLSVDSTFTPPPFFRPLELGVDLVIHSLTKYINGHGDAMGGVVIGSKKLVHHIKADALVDLGGTISPFNAWLITRGSVTLPLRLKQQFSTAEIVARYLESENRLAFVTYPGLERHDQHHLAKAQFGGKGYGAMMAFAVDGDPDTQNRFVSNLKVITSAVSLGHDETLIVHVGGGGRGGAERYPLNFQKYGHLRLSIGLEDPEDLIADIKNALDLTFA.

At lysine 214 the chain carries N6-(pyridoxal phosphate)lysine.

The protein belongs to the trans-sulfuration enzymes family. Pyridoxal 5'-phosphate is required as a cofactor.

It carries out the reaction L-canavanine + H2O = N-hydroxyguanidine + L-homoserine. Lyase involved in the degradation of canavanine, the delta-oxa-analog of arginine, allowing growth on canavanine as sole nitrogen and carbon source. Catalyzes the elimination of hydroxyguanidine from canavanine with a subsequent water addition to yield homoserine. The chain is Canavanine gamma-lyase from Rhizobium leguminosarum bv. trifolii (strain WSM2304).